The sequence spans 368 residues: C-X-C chemokine receptor type 3 (368 aa).

Residues 1–53 are Extracellular-facing; the sequence is MVLEVSDHQVLNDAEVAALLENFSSSYDYGENESDSCCTSPPCPQDFSLNFDR. A glycan (N-linked (GlcNAc...) asparagine) is linked at Asn22. Sulfotyrosine occurs at positions 27 and 29. N-linked (GlcNAc...) asparagine glycosylation is present at Asn32. A helical membrane pass occupies residues 54-80; it reads AFLPALYSLLFLLGLLGNGAVAAVLLS. Residues 81-89 are Cytoplasmic-facing; sequence RRTALSSTD. A helical transmembrane segment spans residues 90–110; sequence TFLLHLAVADTLLVLTLPLWA. At 111–125 the chain is on the extracellular side; that stretch reads VDAAVQWVFGSGLCK. The cysteines at positions 124 and 203 are disulfide-linked. Residues 126–147 form a helical membrane-spanning segment; that stretch reads VAGALFNINFYAGALLLACISF. Topologically, residues 148–169 are cytoplasmic; it reads DRYLNIVHATQLYRRGPPARVT. A helical membrane pass occupies residues 170-189; it reads LTCLAVWGLCLLFALPDFIF. Residues 190 to 212 lie on the Extracellular side of the membrane; that stretch reads LSAHHDERLNATHCQYNFPQVGR. Residues 213-233 form a helical membrane-spanning segment; the sequence is TALRVLQLVAGFLLPLLVMAY. Topologically, residues 234-255 are cytoplasmic; that stretch reads CYAHILAVLLVSRGQRRLRAMR. The chain crosses the membrane as a helical span at residues 256–277; it reads LVVVVVVAFALCWTPYHLVVLV. Residues 278 to 298 are Extracellular-facing; the sequence is DILMDLGALARNCGRESRVDV. Residues 299 to 321 form a helical membrane-spanning segment; the sequence is AKSVTSGLGYMHCCLNPLLYAFV. At 322–368 the chain is on the cytoplasmic side; the sequence is GVKFRERMWMLLLRLGCPNQRGLQRQPSSSRRDSSWSETSEASYSGL. Residues 342-368 form a disordered region; sequence RGLQRQPSSSRRDSSWSETSEASYSGL. The segment covering 357–368 has biased composition (low complexity); sequence WSETSEASYSGL.

This sequence belongs to the G-protein coupled receptor 1 family. As to quaternary structure, homomer. Forms heteromers with ACKR4. Interacts with PF4/CXCL4. In terms of processing, sulfation on Tyr-27 and Tyr-29 is essential for CXCL10 binding and subsequent signal transduction induction. N-glycosylated. As to expression, isoform 1 and isoform 2 are mainly expressed in heart, kidney, liver and skeletal muscle. Isoform 1 is also expressed in placenta. Isoform 2 is expressed in endothelial cells. Expressed in T-cells (at protein level).

It is found in the cell membrane. In terms of biological role, receptor for the C-X-C chemokine CXCL9, CXCL10 and CXCL11 and mediates the proliferation, survival and angiogenic activity of human mesangial cells (HMC) through a heterotrimeric G-protein signaling pathway. Binds to CCL21. Probably promotes cell chemotaxis response. Upon activation by PF4, induces activated T-lymphocytes migration mediated via downstream Ras/extracellular signal-regulated kinase (ERK) signaling. Its function is as follows. Receptor for the C-X-C chemokine CXCL4 and also mediates the inhibitory activities of CXCL9, CXCL10 and CXCL11 on the proliferation, survival and angiogenic activity of human microvascular endothelial cells (HMVEC) through a cAMP-mediated signaling pathway. Does not promote cell chemotaxis respons. Interaction with CXCL4 or CXCL10 leads to activation of the p38MAPK pathway and contributes to inhibition of angiogenesis. Overexpression in renal cancer cells down-regulates expression of the anti-apoptotic protein HMOX1 and promotes apoptosis. Functionally, mediates the activity of CXCL11. This chain is C-X-C chemokine receptor type 3 (CXCR3), found in Homo sapiens (Human).